The primary structure comprises 693 residues: Elongation factor G (693 aa).

In terms of domain architecture, tr-type G spans E8–L282. Residues A17–T24, D81–H85, and N135–D138 contribute to the GTP site.

The protein belongs to the TRAFAC class translation factor GTPase superfamily. Classic translation factor GTPase family. EF-G/EF-2 subfamily.

It localises to the cytoplasm. Catalyzes the GTP-dependent ribosomal translocation step during translation elongation. During this step, the ribosome changes from the pre-translocational (PRE) to the post-translocational (POST) state as the newly formed A-site-bound peptidyl-tRNA and P-site-bound deacylated tRNA move to the P and E sites, respectively. Catalyzes the coordinated movement of the two tRNA molecules, the mRNA and conformational changes in the ribosome. The protein is Elongation factor G of Staphylococcus aureus (strain Newman).